The primary structure comprises 77 residues: Small ribosomal subunit protein bS18 (77 aa).

It belongs to the bacterial ribosomal protein bS18 family. As to quaternary structure, part of the 30S ribosomal subunit. Forms a tight heterodimer with protein bS6.

In terms of biological role, binds as a heterodimer with protein bS6 to the central domain of the 16S rRNA, where it helps stabilize the platform of the 30S subunit. The chain is Small ribosomal subunit protein bS18 from Lactobacillus helveticus (strain DPC 4571).